We begin with the raw amino-acid sequence, 202 residues long: Urease accessory protein UreF (202 aa).

This sequence belongs to the UreF family. UreD, UreF and UreG form a complex that acts as a GTP-hydrolysis-dependent molecular chaperone, activating the urease apoprotein by helping to assemble the nickel containing metallocenter of UreC. The UreE protein probably delivers the nickel.

Its subcellular location is the cytoplasm. In terms of biological role, required for maturation of urease via the functional incorporation of the urease nickel metallocenter. The polypeptide is Urease accessory protein UreF (Sporosarcina pasteurii (Bacillus pasteurii)).